Consider the following 61-residue polypeptide: Large ribosomal subunit protein uL30 (61 aa).

The protein belongs to the universal ribosomal protein uL30 family. In terms of assembly, part of the 50S ribosomal subunit.

In Fervidobacterium nodosum (strain ATCC 35602 / DSM 5306 / Rt17-B1), this protein is Large ribosomal subunit protein uL30.